The following is a 363-amino-acid chain: MWIVKGILSSVVLKGHYSLFSRPPPSSLPDYALRFLHFTCCRSSKIMFSEFDSSNASISPELRQENAKALDSCYTEEQRAVILQRLNTATESELEQVKLLRGRKSVNIVKYRTRHGPFSSLESVINVPLLKYKSAIMVFDSILNPDNKRKRNKGKVHLAKFIKPDVNRAHLEDASSIISIVCGTNKIAWAHMDRARTVLDWQQAECQSFMKGTYLASDYLEDISSVISSFPAADFFLVEKPSISPQNTSLFPVMVHLRTVEAMLFALLSQAREPGSPPKVLNMMRISVGRHFDLMVGDCRTSGAETLRKMMTDSVMKRDPRVLFPHDLVLKHRNSFQMSSRNKGEEMCDALLQAVAFFELLQE.

The transit peptide at 1–23 (MWIVKGILSSVVLKGHYSLFSRP) directs the protein to the mitochondrion.

It belongs to the TEFM family.

Its subcellular location is the mitochondrion matrix. It is found in the mitochondrion nucleoid. Transcription elongation factor which increases mitochondrial RNA polymerase processivity. Regulates transcription of the mitochondrial genome, including genes important for the oxidative phosphorylation machinery. This Danio rerio (Zebrafish) protein is Transcription elongation factor, mitochondrial (tefm).